Here is a 413-residue protein sequence, read N- to C-terminus: Serine hydroxymethyltransferase (413 aa).

Residues L117 and 121 to 123 (GHL) contribute to the (6S)-5,6,7,8-tetrahydrofolate site. Residue K226 is modified to N6-(pyridoxal phosphate)lysine. (6S)-5,6,7,8-tetrahydrofolate-binding positions include E239 and 349–351 (SPF).

Belongs to the SHMT family. In terms of assembly, homodimer. Pyridoxal 5'-phosphate is required as a cofactor.

It localises to the cytoplasm. It carries out the reaction (6R)-5,10-methylene-5,6,7,8-tetrahydrofolate + glycine + H2O = (6S)-5,6,7,8-tetrahydrofolate + L-serine. The protein operates within one-carbon metabolism; tetrahydrofolate interconversion. It functions in the pathway amino-acid biosynthesis; glycine biosynthesis; glycine from L-serine: step 1/1. Its function is as follows. Catalyzes the reversible interconversion of serine and glycine with tetrahydrofolate (THF) serving as the one-carbon carrier. This reaction serves as the major source of one-carbon groups required for the biosynthesis of purines, thymidylate, methionine, and other important biomolecules. Also exhibits THF-independent aldolase activity toward beta-hydroxyamino acids, producing glycine and aldehydes, via a retro-aldol mechanism. The chain is Serine hydroxymethyltransferase from Bacillus cereus (strain AH820).